Consider the following 497-residue polypeptide: Tripartite motif-containing protein 5 (497 aa).

Ala-2 is subject to N-acetylalanine. Residues 15-60 (CPICLELLTEPLSLPCGHSFCQACITANHRKSMLYKEGERSCPVCR) form an RING-type zinc finger. Ser-87 is modified (phosphoserine). Residues 92 to 133 (LKVDHCARHGEKLLLFCQEDSKVICWLCERSQEHRGHHTFLM) form a B box-type zinc finger. Zn(2+) contacts are provided by Cys-97, His-100, Cys-119, and His-125. Residues 137-225 (AQEYHVKLQT…LTKSETEMVQ (89 aa)) are a coiled coil. Residues 187-200 (FEQLREILDWEESN) are required for interaction with GABARAP and for autophagy. Positions 283–497 (LKGMLDMFRE…VPMTLCSPSS (215 aa)) constitute a B30.2/SPRY domain.

This sequence belongs to the TRIM/RBCC family. In terms of assembly, can form homodimers and homotrimers. In addition to lower-order dimerization, also exhibits a higher-order multimerization and both low- and high-order multimerizations are essential for its restriction activity. Interacts with BTBD1 and BTBD2. Interacts with PSMC4, PSMC5, PSMD7 and HSPA8/HSC70. Interacts (via B30.2/SPRY domain) with HSPA1A/B. Interacts with PSMC2, MAP3K7/TAK1, TAB2 and TAB3. Interacts with SQSTM1. Interacts with TRIM6 and TRIM34. Interacts with ULK1 (phosphorylated form), GABARAP, GABARAPL1, GABARAPL2, MAP1LC3A, MAP1LC3C and BECN1. Degraded in a proteasome-independent fashion in the absence of viral infection but in a proteasome-dependent fashion following exposure to restriction sensitive virus. Post-translationally, autoubiquitinated in a RING finger- and UBE2D2-dependent manner. Monoubiquitinated by TRIM21. Deubiquitinated by Yersinia YopJ. Ubiquitination may not lead to proteasomal degradation.

The protein localises to the cytoplasm. Its subcellular location is the nucleus. It catalyses the reaction S-ubiquitinyl-[E2 ubiquitin-conjugating enzyme]-L-cysteine + [acceptor protein]-L-lysine = [E2 ubiquitin-conjugating enzyme]-L-cysteine + N(6)-ubiquitinyl-[acceptor protein]-L-lysine.. It participates in protein modification; protein ubiquitination. In terms of biological role, capsid-specific restriction factor that prevents infection from non-host-adapted retroviruses. Blocks viral replication early in the life cycle, after viral entry but before reverse transcription. In addition to acting as a capsid-specific restriction factor, also acts as a pattern recognition receptor that activates innate immune signaling in response to the retroviral capsid lattice. Binding to the viral capsid triggers its E3 ubiquitin ligase activity, and in concert with the heterodimeric ubiquitin conjugating enzyme complex UBE2V1-UBE2N (also known as UBC13-UEV1A complex) generates 'Lys-63'-linked polyubiquitin chains, which in turn are catalysts in the autophosphorylation of the MAP3K7/TAK1 complex (includes TAK1, TAB2, and TAB3). Activation of the MAP3K7/TAK1 complex by autophosphorylation results in the induction and expression of NF-kappa-B and MAPK-responsive inflammatory genes, thereby leading to an innate immune response in the infected cell. Plays a role in regulating autophagy through activation of autophagy regulator BECN1 by causing its dissociation from its inhibitors BCL2 and TAB2. The sequence is that of Tripartite motif-containing protein 5 (TRIM5) from Papio anubis (Olive baboon).